A 465-amino-acid chain; its full sequence is Serine/threonine-protein kinase AtPK1/AtPK6 (465 aa).

The LVxCxE motif motif lies at 91-96 (LVECLE). The region spanning 134–389 (FEVMKVVGKG…AEEIKQHKWF (256 aa)) is the Protein kinase domain. ATP-binding positions include 140-148 (VGKGAFGKV) and Lys-163. Asp-257 serves as the catalytic Proton acceptor. The tract at residues 275–301 (DFGLAKEFEENTRSNSMCGTTEYMAPE) is activation loop. The residue at position 290 (Ser-290) is a Phosphoserine; by PDPK1. The region spanning 390-460 (KGINWKKLEA…VRPPPSFLHQ (71 aa)) is the AGC-kinase C-terminal domain. Thr-449 is modified (phosphothreonine; by TOR).

Belongs to the protein kinase superfamily. AGC Ser/Thr protein kinase family. S6 kinase subfamily. As to quaternary structure, interacts with RAPTOR1. Interacts with RBR1-E2FB complex through its LVxCxE motif. Interacts with TAP46. Binds to MRF1. Post-translationally, undergoes serine-specific autophosphorylation. Phosphorylated at Thr-449 by TOR. As to expression, expressed in all tissues.

The protein localises to the cytoplasm. The protein resides in the nucleus. The enzyme catalyses L-seryl-[protein] + ATP = O-phospho-L-seryl-[protein] + ADP + H(+). It catalyses the reaction L-threonyl-[protein] + ATP = O-phospho-L-threonyl-[protein] + ADP + H(+). Activated by PDK1. Repressed during osmotic stress. Downstream effector of TOR signaling pathway involved in osmotic stress response. Could be involved in the control of plant growth and development. Phosphorylates the ribosomal proteins P14, P16 and S6. Functions as a repressor of cell proliferation and required for maintenance of chromosome stability and ploidy levels through the RBR1-E2F pathway. Mediates the phosphorylation of MRFs (e.g. MRF1). The sequence is that of Serine/threonine-protein kinase AtPK1/AtPK6 from Arabidopsis thaliana (Mouse-ear cress).